A 389-amino-acid chain; its full sequence is Na(+)/H(+) antiporter NhaA (389 aa).

Helical transmembrane passes span 14–34 (AGGI…NSPL), 59–79 (LLLW…GLEV), 95–115 (SLPS…YLLF), 124–144 (AGWA…MALL), 154–174 (VFLL…IALF), 177–197 (SDLS…LVGL), 213–233 (LILW…GVII), 261–281 (FLIL…NMSL), 290–310 (IGIA…FSFI), 328–348 (IAPV…IASL), and 363–383 (LGTL…LSKV).

This sequence belongs to the NhaA Na(+)/H(+) (TC 2.A.33) antiporter family.

Its subcellular location is the cell inner membrane. It carries out the reaction Na(+)(in) + 2 H(+)(out) = Na(+)(out) + 2 H(+)(in). Its function is as follows. Na(+)/H(+) antiporter that extrudes sodium in exchange for external protons. This Shewanella sp. (strain W3-18-1) protein is Na(+)/H(+) antiporter NhaA.